The primary structure comprises 208 residues: Transmembrane protein 160 (208 aa).

Residues 1–45 (MASIRWLMGSRLSRFVCPFAQLVRQPVLRYVRPPVRALHRGSVRR) constitute a mitochondrion transit peptide. 3 helical membrane passes run 82–102 (GFLS…IAFV), 110–130 (AGYA…ASYV), and 147–167 (VLLH…AVSL). Over residues 181-192 (DDEEHGADESSE) the composition is skewed to acidic residues. A disordered region spans residues 181–208 (DDEEHGADESSECAECRARRDREKGQDK). The segment covering 194-208 (AECRARRDREKGQDK) has biased composition (basic and acidic residues).

The protein belongs to the TMEM160 family.

The protein resides in the mitochondrion inner membrane. The chain is Transmembrane protein 160 from Danio rerio (Zebrafish).